The chain runs to 118 residues: Thioredoxin-like protein CXXS1 (118 aa).

The Thioredoxin domain occupies 2 to 110 (ARVVKIDSAE…IKKRVDGFVQ (109 aa)).

It belongs to the thioredoxin family. In terms of tissue distribution, ubiquitous.

It localises to the cytoplasm. Possesses low disulfide reductase activity, but efficient protein disulfide isomerase activity. Does not possess deglutathionylation activity. The chain is Thioredoxin-like protein CXXS1 (CXXS1) from Arabidopsis thaliana (Mouse-ear cress).